A 213-amino-acid polypeptide reads, in one-letter code: Urease accessory protein UreE (213 aa).

Positions 170 to 213 (EHHGRSHSHSHSHSHDHDHDHDHDHDHDHQHGPSCSHGHGHGHR) are disordered. A compositionally biased stretch (basic and acidic residues) spans 182-200 (HSHDHDHDHDHDHDHDHQH).

The protein belongs to the UreE family.

The protein localises to the cytoplasm. Involved in urease metallocenter assembly. Binds nickel. Probably functions as a nickel donor during metallocenter assembly. The protein is Urease accessory protein UreE of Burkholderia thailandensis (strain ATCC 700388 / DSM 13276 / CCUG 48851 / CIP 106301 / E264).